A 604-amino-acid chain; its full sequence is Putative sodium-dependent multivitamin transporter (604 aa).

6 consecutive transmembrane segments (helical) span residues 4 to 24 (LGAWDYTILAVVLIISVAIGI), 48 to 68 (VAPVAFSLMASFMSAVTILGV), 78 to 98 (MFVVINLSYVLSTPVAAYLII), 134 to 154 (VLYMGIVVYAPALALEAVTGL), 160 to 180 (IVIVGVVCTFYATLGGMKAVL), and 188 to 208 (LLMFAAVFSVIICAWVKAGSL). 2 N-linked (GlcNAc...) asparagine glycosylation sites follow: asparagine 222 and asparagine 225. 7 helical membrane passes run 234 to 254 (HTWFTQILGGCATYLAIYGVN), 273 to 293 (ALWWCLPILCLLSLSTCFSGL), 331 to 351 (LAGLFVSGIFCASLSTISSII), 389 to 409 (LFFGALCIGMAFMAGSIGGLL), 413 to 433 (LSIFGIIGGPLLGLFTLGMYV), 440 to 460 (GAIGGLLISLAFCFWIGFGQP), and 511 to 531 (ALGFLITFFGGWLLSWLFALL).

The protein belongs to the sodium:solute symporter (SSF) (TC 2.A.21) family.

It is found in the cell membrane. The polypeptide is Putative sodium-dependent multivitamin transporter (Drosophila melanogaster (Fruit fly)).